The primary structure comprises 133 residues: Small ribosomal subunit protein uS8 (133 aa).

The protein belongs to the universal ribosomal protein uS8 family. In terms of assembly, part of the 30S ribosomal subunit.

In terms of biological role, one of the primary rRNA binding proteins, it binds directly to 16S rRNA central domain where it helps coordinate assembly of the platform of the 30S subunit. In Hyperthermus butylicus (strain DSM 5456 / JCM 9403 / PLM1-5), this protein is Small ribosomal subunit protein uS8.